The chain runs to 816 residues: Sucrose synthase 2 (816 aa).

The residue at position 15 (Ser-15) is a Phosphoserine. The segment at 280 to 757 is GT-B glycosyltransferase; it reads MVFNVVILSP…GLQRIEEKYT (478 aa).

The protein belongs to the glycosyltransferase 1 family. Plant sucrose synthase subfamily.

It catalyses the reaction an NDP-alpha-D-glucose + D-fructose = a ribonucleoside 5'-diphosphate + sucrose + H(+). Functionally, sucrose-cleaving enzyme that provides UDP-glucose and fructose for various metabolic pathways. The polypeptide is Sucrose synthase 2 (SUS1) (Zea mays (Maize)).